Consider the following 549-residue polypeptide: Glucose-6-phosphate isomerase (549 aa).

Catalysis depends on Glu355, which acts as the Proton donor. Catalysis depends on residues His386 and Lys514.

The protein belongs to the GPI family.

It is found in the cytoplasm. The catalysed reaction is alpha-D-glucose 6-phosphate = beta-D-fructose 6-phosphate. The protein operates within carbohydrate biosynthesis; gluconeogenesis. It functions in the pathway carbohydrate degradation; glycolysis; D-glyceraldehyde 3-phosphate and glycerone phosphate from D-glucose: step 2/4. Functionally, catalyzes the reversible isomerization of glucose-6-phosphate to fructose-6-phosphate. The protein is Glucose-6-phosphate isomerase of Klebsiella pneumoniae (strain 342).